The sequence spans 150 residues: MKVIFLADVKGKGKKGEIKEVPTGYAQNFLIKKNLAKEATSQSIGELKGKQKAEEKAQAEILAEAQAVKAVLDEDKTRVQFQEKVGPDGRTFGSITAKKISEELQKQFGVKVDKRHIVLDHPIRAIGLIEVPVKLHKEVTAEIKLTITEA.

This sequence belongs to the bacterial ribosomal protein bL9 family.

In terms of biological role, binds to the 23S rRNA. The polypeptide is Large ribosomal subunit protein bL9 (Streptococcus pyogenes serotype M2 (strain MGAS10270)).